Consider the following 259-residue polypeptide: Ubiquitin-conjugating enzyme E2 J2 (259 aa).

Residues methionine 1–histidine 226 are Cytoplasmic-facing. A UBC core domain is found at threonine 12–glutamate 162. Cysteine 94 functions as the Glycyl thioester intermediate in the catalytic mechanism. The interval glutamine 174–histidine 200 is disordered. Residues glycine 227–tyrosine 247 form a helical; Anchor for type IV membrane protein membrane-spanning segment. At threonine 248 to glutamate 259 the chain is on the lumenal side.

It belongs to the ubiquitin-conjugating enzyme family.

The protein resides in the endoplasmic reticulum membrane. The enzyme catalyses S-ubiquitinyl-[E1 ubiquitin-activating enzyme]-L-cysteine + [E2 ubiquitin-conjugating enzyme]-L-cysteine = [E1 ubiquitin-activating enzyme]-L-cysteine + S-ubiquitinyl-[E2 ubiquitin-conjugating enzyme]-L-cysteine.. It participates in protein modification; protein ubiquitination. Functionally, catalyzes the covalent attachment of ubiquitin to other proteins. Seems to function in the selective degradation of misfolded membrane proteins from the endoplasmic reticulum (ERAD). In cooperation with the GATOR2 complex, catalyzes 'Lys-6'-linked ubiquitination of NPRL2. This chain is Ubiquitin-conjugating enzyme E2 J2 (UBE2J2), found in Bos taurus (Bovine).